Reading from the N-terminus, the 338-residue chain is MTLKEALGKVVGRRDLTREEMTRIMGLMLAGEASPAQVGALATALKMKGETEDEILGAAEAMRACAAKLSPRADVVLDTCGTGGDGAHTFNISTAVAFVAAGAGVTVAKHGNRAVSSRCGSADVLAALGVSMERPHERVARDIDEHGVGFLFAPSHHGALRHVAQARRDMGFHSVFNLLGPLTNPAGARYQLLGTFDGKRVEQTARVLGRLGSRRAWVVHGHDGLDEISPCSATQVAELREDGTVHTFTVSPQDAGLDVVPREAIAGGDAEENAQRLRALLDGERSGLRTAVLLNAAAALVVVGLAADLRDGVRKAEQAIDSGAARNKLSALIEGGLS.

5-phospho-alpha-D-ribose 1-diphosphate contacts are provided by residues Gly-81, 84–85, Thr-89, 91–94, 109–117, and Ser-121; these read GD, NIST, and KHGNRAVSS. Gly-81 provides a ligand contact to anthranilate. Ser-93 lines the Mg(2+) pocket. Asn-112 contributes to the anthranilate binding site. Arg-167 is a binding site for anthranilate. Mg(2+) is bound by residues Asp-226 and Glu-227.

It belongs to the anthranilate phosphoribosyltransferase family. Homodimer. Mg(2+) is required as a cofactor.

It catalyses the reaction N-(5-phospho-beta-D-ribosyl)anthranilate + diphosphate = 5-phospho-alpha-D-ribose 1-diphosphate + anthranilate. The protein operates within amino-acid biosynthesis; L-tryptophan biosynthesis; L-tryptophan from chorismate: step 2/5. Functionally, catalyzes the transfer of the phosphoribosyl group of 5-phosphorylribose-1-pyrophosphate (PRPP) to anthranilate to yield N-(5'-phosphoribosyl)-anthranilate (PRA). The chain is Anthranilate phosphoribosyltransferase from Myxococcus xanthus (strain DK1622).